Consider the following 234-residue polypeptide: Preprocaerulein type-4 (234 aa).

The signal sequence occupies residues 1–26 (MFKGILLCVLFAVLSANPLSQPEGFA). The propeptide occupies 27–73 (DEEERDVRGLASLLGKALKAALKIGANALGGSPQQREANDERRFADG). Y77 carries the post-translational modification Sulfotyrosine. F83 carries the post-translational modification Phenylalanine amide. Residues 87-137 (DDEDDVNERDVRGFGSFLGKALKAGLKIGTHFLGGAPQQREANDERRFADG) constitute a propeptide that is removed on maturation. Y141 bears the Sulfotyrosine mark. F147 carries the post-translational modification Phenylalanine amide. Positions 151–152 (DG) are excised as a propeptide. Y156 carries the sulfotyrosine modification. F162 bears the Phenylalanine amide mark. A propeptide spanning residues 166-216 (DDEDDVHERDVRGFGSFLGKALKAALKIGANALGGSPQQREANDERRFADG) is cleaved from the precursor. A disordered region spans residues 198-234 (LGGSPQQREANDERRFADGQQDYTGWMDFGRRNGEDD). A Sulfotyrosine modification is found at Y220. F226 is modified (phenylalanine amide). Residues 230-234 (NGEDD) constitute a propeptide that is removed on maturation.

This sequence belongs to the gastrin/cholecystokinin family. In terms of tissue distribution, expressed by the skin glands.

The protein localises to the secreted. The pharmacological activities of caerulein are quite similar to the physiological activities of gastrin and related peptides. In Xenopus borealis (Kenyan clawed frog), this protein is Preprocaerulein type-4.